We begin with the raw amino-acid sequence, 218 residues long: Small ribosomal subunit protein uS3 (218 aa).

Residues 38–106 form the KH type-2 domain; the sequence is IREFISKRLS…RVHINILEIK (69 aa).

The protein belongs to the universal ribosomal protein uS3 family. Part of the 30S ribosomal subunit. Forms a tight complex with proteins S10 and S14.

Functionally, binds the lower part of the 30S subunit head. Binds mRNA in the 70S ribosome, positioning it for translation. The chain is Small ribosomal subunit protein uS3 from Bacillus pumilus (strain SAFR-032).